Reading from the N-terminus, the 255-residue chain is 1-(5-phosphoribosyl)-5-[(5-phosphoribosylamino)methylideneamino] imidazole-4-carboxamide isomerase (255 aa).

D8 (proton acceptor) is an active-site residue. D129 acts as the Proton donor in catalysis.

The protein belongs to the HisA/HisF family.

The protein localises to the cytoplasm. The enzyme catalyses 1-(5-phospho-beta-D-ribosyl)-5-[(5-phospho-beta-D-ribosylamino)methylideneamino]imidazole-4-carboxamide = 5-[(5-phospho-1-deoxy-D-ribulos-1-ylimino)methylamino]-1-(5-phospho-beta-D-ribosyl)imidazole-4-carboxamide. It functions in the pathway amino-acid biosynthesis; L-histidine biosynthesis; L-histidine from 5-phospho-alpha-D-ribose 1-diphosphate: step 4/9. This Prochlorococcus marinus (strain MIT 9313) protein is 1-(5-phosphoribosyl)-5-[(5-phosphoribosylamino)methylideneamino] imidazole-4-carboxamide isomerase.